Here is a 403-residue protein sequence, read N- to C-terminus: Phosphopentomutase (403 aa).

Residues aspartate 13, aspartate 298, histidine 303, aspartate 339, histidine 340, and histidine 351 each contribute to the Mn(2+) site.

Belongs to the phosphopentomutase family. It depends on Mn(2+) as a cofactor.

Its subcellular location is the cytoplasm. The enzyme catalyses 2-deoxy-alpha-D-ribose 1-phosphate = 2-deoxy-D-ribose 5-phosphate. The catalysed reaction is alpha-D-ribose 1-phosphate = D-ribose 5-phosphate. It participates in carbohydrate degradation; 2-deoxy-D-ribose 1-phosphate degradation; D-glyceraldehyde 3-phosphate and acetaldehyde from 2-deoxy-alpha-D-ribose 1-phosphate: step 1/2. Isomerase that catalyzes the conversion of deoxy-ribose 1-phosphate (dRib-1-P) and ribose 1-phosphate (Rib-1-P) to deoxy-ribose 5-phosphate (dRib-5-P) and ribose 5-phosphate (Rib-5-P), respectively. The polypeptide is Phosphopentomutase (Streptococcus mutans serotype c (strain ATCC 700610 / UA159)).